The sequence spans 345 residues: WD40 repeat protein poxJ (345 aa).

4 WD repeats span residues 15–49, 59–100, 101–146, and 250–284; these read ANPP…YDVS, LFNF…EAQQ, VAAH…PLAT, and VNDV…RLKS.

This sequence belongs to the WD repeat rae1 family.

It participates in secondary metabolite biosynthesis. WD40 repeat protein; part of the gene cluster that mediates the biosynthesis of oxaleimides, cytotoxic compounds containing an unusual disubstituted succinimide moiety. The first step of the pathway is provided by the HR-PKS poxF that serves in a new mode of collaborative biosynthesis with the PKS-NRPS poxE, by providing the olefin containing amino acid substrate via the synthesis of an ACP-bound dec-4-enoate. The cytochrome P450 monooxygenase poxM-catalyzed oxidation at the alpha-position creates the enzyme-bound 2-hydroxydec-4-enoyl-ACP thioester, which may be prone to spontaneous hydrolysis to yield 2-hydroxydec-4-enoic acid due to increased electrophilicity of the carbonyl. 2-hydroxydec-4-enoic acid can then be further oxidized by poxM to yield the alpha-ketoacid 2-oxodec-4-enoicacid, which is reductively aminated by the aminotransferase poxL to yield (S,E)-2-aminodec-4-enoic acid. The Hybrid PKS-NRPS synthetase poxE then performs condensation between the octaketide product of its PKS modules and the amino group of (S,E)-2-aminodec-4-enoic acid which is activated and incorporated by the adenylation domain. The resulting aminoacyl product can be cyclized by the Diels-Alderase PoxQ and reductively released by the reductive (R) domain of poxE to yield an aldehyde intermediate. The released aldehyde is then substrate for a Knoevenagel condensation by the hydrolyase poxO followed by an oxidation at the 5-position of the pyrrolidone ring. The presence of the olefin from the amino acid building block allows for migration of the substituted allyl group to occur. This allylic transposition reaction takes place in a conjugate addition, semipinacol-like fashion to yield a succinimide intermediate. Iterative two-electron oxidations of the C7 methyl of the succinimide intermediate to the carboxylic acid can be catalyzed by one of two remaining cytochrome P450 monooxygenasess poxC or poxD to yield oxaleimide A. Subsequent oxidation yields the maleimide scaffold oxaleimide I. Both oxaleimide A and oxaleimide I can undergo oxidative modifications in the decalin ring to yield the series of products oxaleimides B to H. This is WD40 repeat protein poxJ from Penicillium oxalicum (strain 114-2 / CGMCC 5302) (Penicillium decumbens).